Here is a 172-residue protein sequence, read N- to C-terminus: Putative methyltransferase Mtx subunit A (172 aa).

This sequence belongs to the MtrA family. May be part of a complex composed of 3 subunits; MtxA, MtxH and MtxX.

This Methanosarcina mazei (strain ATCC BAA-159 / DSM 3647 / Goe1 / Go1 / JCM 11833 / OCM 88) (Methanosarcina frisia) protein is Putative methyltransferase Mtx subunit A (mtxA).